The following is a 663-amino-acid chain: Putative glucosamine-6-phosphate deaminase-like protein BT_0258 (663 aa).

A glucosamine-6-phosphate deaminase-like region spans residues 1 to 290; that stretch reads MKTNLSSQIT…NLTRIQRPWL (290 aa). Glu-184 is an active-site residue.

In the N-terminal section; belongs to the glucosamine/galactosamine-6-phosphate isomerase family. NagB subfamily.

In Bacteroides thetaiotaomicron (strain ATCC 29148 / DSM 2079 / JCM 5827 / CCUG 10774 / NCTC 10582 / VPI-5482 / E50), this protein is Putative glucosamine-6-phosphate deaminase-like protein BT_0258.